A 128-amino-acid chain; its full sequence is UPF0325 protein YaeH (128 aa).

Belongs to the UPF0325 family.

The chain is UPF0325 protein YaeH from Salmonella agona (strain SL483).